The primary structure comprises 287 residues: 4-hydroxybenzoate octaprenyltransferase (287 aa).

9 consecutive transmembrane segments (helical) span residues 22–42 (IGTYLLLWPTYWALWIASDGW), 45–65 (LQLLLVFSLGVFIMRSAGCVI), 95–115 (AINLFGVLIGMAFGLVLMLSW), 116–136 (STIYLSVVAVLLAAIYPFMKR), 140–160 (LPQLFLGAAFSWGMIMAFSEA), 162–182 (GEIPLVAWLLFTANLCWTIAY), 214–234 (IGFLQLMTLALLWTVGDILAF), 237–257 (PYQLCIIAAAGLFSYQQLLIV), and 264–284 (CFQAFLHNHWVGLVVFVGIAI).

The protein belongs to the UbiA prenyltransferase family. The cofactor is Mg(2+).

The protein localises to the cell inner membrane. It carries out the reaction all-trans-octaprenyl diphosphate + 4-hydroxybenzoate = 4-hydroxy-3-(all-trans-octaprenyl)benzoate + diphosphate. The protein operates within cofactor biosynthesis; ubiquinone biosynthesis. In terms of biological role, catalyzes the prenylation of para-hydroxybenzoate (PHB) with an all-trans polyprenyl group. Mediates the second step in the final reaction sequence of ubiquinone-8 (UQ-8) biosynthesis, which is the condensation of the polyisoprenoid side chain with PHB, generating the first membrane-bound Q intermediate 3-octaprenyl-4-hydroxybenzoate. This Colwellia psychrerythraea (strain 34H / ATCC BAA-681) (Vibrio psychroerythus) protein is 4-hydroxybenzoate octaprenyltransferase.